A 202-amino-acid polypeptide reads, in one-letter code: UPF0637 protein Exig_2520 (202 aa).

It belongs to the UPF0637 family.

In Exiguobacterium sibiricum (strain DSM 17290 / CCUG 55495 / CIP 109462 / JCM 13490 / 255-15), this protein is UPF0637 protein Exig_2520.